Here is a 228-residue protein sequence, read N- to C-terminus: Ribose-5-phosphate isomerase A (228 aa).

Residues 28–31, 84–87, and 97–100 contribute to the substrate site; these read TGST, DGAD, and KGGG. The active-site Proton acceptor is the glutamate 106. Lysine 124 serves as a coordination point for substrate.

Belongs to the ribose 5-phosphate isomerase family. As to quaternary structure, homodimer.

It catalyses the reaction aldehydo-D-ribose 5-phosphate = D-ribulose 5-phosphate. It participates in carbohydrate degradation; pentose phosphate pathway; D-ribose 5-phosphate from D-ribulose 5-phosphate (non-oxidative stage): step 1/1. Functionally, catalyzes the reversible conversion of ribose-5-phosphate to ribulose 5-phosphate. The chain is Ribose-5-phosphate isomerase A from Levilactobacillus brevis (strain ATCC 367 / BCRC 12310 / CIP 105137 / JCM 1170 / LMG 11437 / NCIMB 947 / NCTC 947) (Lactobacillus brevis).